Here is a 349-residue protein sequence, read N- to C-terminus: Estrogen receptor (349 aa).

A DNA-binding region (nuclear receptor) is located at residues 1–5 (YEVGM). Residues 1–38 (YEVGMMKGGIRKDRRGGRMLKHKRQREENDSRNAGALT) form a disordered region. The span at 12-24 (KDRRGGRMLKHKR) shows a compositional bias: basic residues. The region spanning 65-301 (TADQMVSALL…DLLLEMLDAH (237 aa)) is the NR LBD domain. The segment at 306 to 327 (PAAKGSPPSEDDPLNQLAVPSP) is disordered.

This sequence belongs to the nuclear hormone receptor family. NR3 subfamily. As to quaternary structure, binds DNA as a homodimer. Can form a heterodimer with ER-beta.

The protein localises to the nucleus. Functionally, the steroid hormones and their receptors are involved in the regulation of eukaryotic gene expression and affect cellular proliferation and differentiation in target tissues. The protein is Estrogen receptor (ESR1) of Anolis carolinensis (Green anole).